The primary structure comprises 419 residues: MSLMDVLRQQDPDLAQAIDSEAERQRHGIELIASENYVSSAVLAAQGSVLTNKYAEGYPRKRYYGGCEFVDVAEDLAIKRAKQLFGAEHVNVQPHSGAQANMAVQLATLEHGDRVLGMSLAHGGHLTHGHPLNFSGKSYEIHGYGVDRETEQIDYEEVAEIAHKTQPKMIICGASAYPRNINFDLLRTIADNVGAILMADIAHIAGLVAAGLHPSPIGVAQYVTTTTHKTLRGPRGGMIMCSAEHGKNIDKTVFPGVQGGPLMHVIAAKAVAFGEALQPEYRDYMRRVVENAKVLAEALTNEGLRIVSGGTDNHLLLVDLTPVNATGKDAEKALDHAGITVNKNAIPFDPKPPMTASGLRFGTPAATTRGFGPNEMRQIAVWVGQIVRELGNKSLQAKIAGEVRELCAAFPVPGQPEYV.

(6S)-5,6,7,8-tetrahydrofolate contacts are provided by residues L120 and 124-126 (GHL). K229 bears the N6-(pyridoxal phosphate)lysine mark.

Belongs to the SHMT family. In terms of assembly, homodimer. Requires pyridoxal 5'-phosphate as cofactor.

The protein resides in the cytoplasm. It catalyses the reaction (6R)-5,10-methylene-5,6,7,8-tetrahydrofolate + glycine + H2O = (6S)-5,6,7,8-tetrahydrofolate + L-serine. Its pathway is one-carbon metabolism; tetrahydrofolate interconversion. It functions in the pathway amino-acid biosynthesis; glycine biosynthesis; glycine from L-serine: step 1/1. Its function is as follows. Catalyzes the reversible interconversion of serine and glycine with tetrahydrofolate (THF) serving as the one-carbon carrier. This reaction serves as the major source of one-carbon groups required for the biosynthesis of purines, thymidylate, methionine, and other important biomolecules. Also exhibits THF-independent aldolase activity toward beta-hydroxyamino acids, producing glycine and aldehydes, via a retro-aldol mechanism. The protein is Serine hydroxymethyltransferase of Herpetosiphon aurantiacus (strain ATCC 23779 / DSM 785 / 114-95).